The sequence spans 177 residues: MTQKAKNTIYLLILIILSMLCLVYASVPLYSIFCKVTGYGGTVRTATATQSKLGKTTIKIRFNADINKELPWKFYPEIPYTTVKPGEQKLIFYRAENLTNEYVSGMAVYNVTPYKVGKYFNKVACFCFTKQTLSPYQKTIMPVSFFIDPNIETDPETSDVKLITLSYTFFKYKENTK.

Residues 1-8 (MTQKAKNT) are Cytoplasmic-facing. Residues 9-29 (IYLLILIILSMLCLVYASVPL) form a helical; Signal-anchor for type II membrane protein membrane-spanning segment. Over 30 to 177 (YSIFCKVTGY…TFFKYKENTK (148 aa)) the chain is Periplasmic.

Belongs to the COX11/CtaG family.

Its subcellular location is the cell inner membrane. Exerts its effect at some terminal stage of cytochrome c oxidase synthesis, probably by being involved in the insertion of the copper B into subunit I. In Ehrlichia ruminantium (strain Welgevonden), this protein is Cytochrome c oxidase assembly protein CtaG.